A 215-amino-acid chain; its full sequence is 3-dehydroquinate dehydratase (215 aa).

3-dehydroquinate-binding positions include Ser6, 31 to 33, and Arg64; that span reads ELR. The Proton donor/acceptor role is filled by His111. Lys138 serves as the catalytic Schiff-base intermediate with substrate. Residues Arg174, Thr193, and Gln197 each coordinate 3-dehydroquinate.

It belongs to the type-I 3-dehydroquinase family. In terms of assembly, homodimer.

The catalysed reaction is 3-dehydroquinate = 3-dehydroshikimate + H2O. The protein operates within metabolic intermediate biosynthesis; chorismate biosynthesis; chorismate from D-erythrose 4-phosphate and phosphoenolpyruvate: step 3/7. Involved in the third step of the chorismate pathway, which leads to the biosynthesis of aromatic amino acids. Catalyzes the cis-dehydration of 3-dehydroquinate (DHQ) and introduces the first double bond of the aromatic ring to yield 3-dehydroshikimate. The protein is 3-dehydroquinate dehydratase of Ignicoccus hospitalis (strain KIN4/I / DSM 18386 / JCM 14125).